Reading from the N-terminus, the 390-residue chain is MATGDLKRSLRNLEQVLRLLNYPEEVDCVGLIKGDPAASLPIISYSFTSYSPYVTELIMESNVELIAKNDLRFIDAVYKLLRDQFNYKPILTKKQFIQCGFAEWKIQIVCDILNCVMKKHKELSSLQKIPSQQRKKISSGKSEPPLGNEKISAEAVGVDISGRFMTSGKKKAVVIRHLYNEDNVDISEDTLSPITDVNEAVDVSDLNATEIKMPEVKVPEIKAEQQDVNVNPEITALQTMLAECQENLKKLTSIEKRLDCLEQKMKGKVMVDENTWTNLLSRVTLLETEMLLSKKNDEFIEFNEVSEDYASCSDMDLLNPHRKSEVERPASIPLSSGYSTASSDSTPRASTVNYCGLNEISEETTIQKMERMKKMFEETAELLKCPNHYL.

The segment at 11–195 is binds with microtubules and centrioles; that stretch reads RNLEQVLRLL…ISEDTLSPIT (185 aa). Residues 233-269 are a coiled coil; it reads EITALQTMLAECQENLKKLTSIEKRLDCLEQKMKGKV. Positions 322–348 are disordered; sequence RKSEVERPASIPLSSGYSTASSDSTPR. Ser331 and Ser345 each carry phosphoserine. A compositionally biased stretch (low complexity) spans 335 to 345; the sequence is SSGYSTASSDS. Thr346 is subject to Phosphothreonine. A coiled-coil region spans residues 361–385; sequence SEETTIQKMERMKKMFEETAELLKC.

In terms of assembly, interacts with CROCC. Interacts with POC1B; the interaction is direct and recruits POC1B to centriolar microtubules. Binds to centriolar microtubules.

It localises to the cytoplasm. The protein resides in the cytoskeleton. The protein localises to the microtubule organizing center. It is found in the centrosome. Its subcellular location is the centriole. It localises to the spindle pole. The protein resides in the midbody. Functionally, centriole-enriched microtubule-binding protein involved in centriole biogenesis. In collaboration with CEP295 and POC1B, is required for the centriole-to-centrosome conversion by ensuring the formation of bona fide centriole wall. Functions as a linker component that maintains centrosome cohesion. Associates with CROCC and regulates its stability and localization to the centrosome. This chain is Centrosomal protein of 44 kDa (CEP44), found in Homo sapiens (Human).